The chain runs to 540 residues: tRNA-2-methylthio-N(6)-dimethylallyladenosine synthase (540 aa).

The region spanning 41 to 157 is the MTTase N-terminal domain; that stretch reads RTYEVRTFGC…LPTLLERSAH (117 aa). Cys50, Cys86, Cys120, Cys194, Cys198, and Cys201 together coordinate [4Fe-4S] cluster. Positions 180–416 constitute a Radical SAM core domain; that stretch reads RESAYSGWVS…IALQERIQAE (237 aa). One can recognise a TRAM domain in the interval 419–486; that stretch reads KELVGTTQEL…PFFLIADGPL (68 aa).

Belongs to the methylthiotransferase family. MiaB subfamily. As to quaternary structure, monomer. [4Fe-4S] cluster serves as cofactor.

Its subcellular location is the cytoplasm. The enzyme catalyses N(6)-dimethylallyladenosine(37) in tRNA + (sulfur carrier)-SH + AH2 + 2 S-adenosyl-L-methionine = 2-methylsulfanyl-N(6)-dimethylallyladenosine(37) in tRNA + (sulfur carrier)-H + 5'-deoxyadenosine + L-methionine + A + S-adenosyl-L-homocysteine + 2 H(+). Catalyzes the methylthiolation of N6-(dimethylallyl)adenosine (i(6)A), leading to the formation of 2-methylthio-N6-(dimethylallyl)adenosine (ms(2)i(6)A) at position 37 in tRNAs that read codons beginning with uridine. This chain is tRNA-2-methylthio-N(6)-dimethylallyladenosine synthase, found in Corynebacterium urealyticum (strain ATCC 43042 / DSM 7109).